The primary structure comprises 500 residues: Cobyric acid synthase (500 aa).

A GATase cobBQ-type domain is found at 253–446; that stretch reads KIGVAAIYFP…FHGFFDRPEV (194 aa). The Nucleophile role is filled by Cys-334. The active site involves His-438.

It belongs to the CobB/CobQ family. CobQ subfamily.

The protein operates within cofactor biosynthesis; adenosylcobalamin biosynthesis. In terms of biological role, catalyzes amidations at positions B, D, E, and G on adenosylcobyrinic A,C-diamide. NH(2) groups are provided by glutamine, and one molecule of ATP is hydrogenolyzed for each amidation. The polypeptide is Cobyric acid synthase (Chlorobaculum tepidum (strain ATCC 49652 / DSM 12025 / NBRC 103806 / TLS) (Chlorobium tepidum)).